The sequence spans 321 residues: uncharacterized protein (321 aa).

An Exonuclease domain is found at 130 to 314 (NLVYDLETTG…NDVDALIKIM (185 aa)).

This is an uncharacterized protein from Acanthamoeba polyphaga (Amoeba).